The sequence spans 446 residues: D(1A) dopamine receptor (446 aa).

Topologically, residues 1-23 are extracellular; it reads MRTLNTSTMDGTGLVVERDFSFR. Asn-5 carries an N-linked (GlcNAc...) asparagine glycan. The helical transmembrane segment at 24–49 threads the bilayer; the sequence is ILTACFLSLLILSTLLGNTLVCAAVI. Over 50–60 the chain is Cytoplasmic; sequence RFRHLRSKVTN. Residues 61 to 87 form a helical membrane-spanning segment; the sequence is FFVISLAVSDLLVAVLVMPWKAVAEIA. The Extracellular portion of the chain corresponds to 88-96; sequence GFWPFGSFC. The cysteines at positions 96 and 186 are disulfide-linked. A helical transmembrane segment spans residues 97–119; it reads NIWVAFDIMCSTASILNLCVISV. Residues 120-138 are Cytoplasmic-facing; it reads DRYWAISSPFRYERKMTPK. A helical membrane pass occupies residues 139–163; sequence AAFILISVAWTLSVLISFIPVQLSW. Residues 164–192 lie on the Extracellular side of the membrane; it reads HKAKPTSPSDGNVTSLGKTTHNCDSSLSR. A helical transmembrane segment spans residues 193-218; that stretch reads TYAISSSLISFYIPVAIMIVTYTRIY. At 219–272 the chain is on the cytoplasmic side; it reads RIAQKQIRRISALERAAVHAKNCQTTAGNGNPAECSQPESSFKMSFKRETKVLK. A helical membrane pass occupies residues 273 to 299; the sequence is TLSVIMGVFVCCWLPFFILNCMVPFCG. Topologically, residues 300–312 are extracellular; that stretch reads SGETKPFCIDSIT. A helical transmembrane segment spans residues 313 to 337; the sequence is FDVFVWFGWANSSLNPIIYAFNADF. The Cytoplasmic segment spans residues 338–446; sequence RKAFSTLLGC…PITQNGQHPT (109 aa). 2 S-palmitoyl cysteine lipidation sites follow: Cys-347 and Cys-351.

It belongs to the G-protein coupled receptor 1 family. In terms of assembly, interacts with DNAJC14 via its C-terminus. Interacts with DRD2. Interacts with DORIP1.

The protein localises to the cell membrane. Its subcellular location is the endoplasmic reticulum membrane. It is found in the cell projection. It localises to the cilium membrane. The protein resides in the dendrite. The protein localises to the dendritic spine. Its function is as follows. Dopamine receptor whose activity is mediated by G proteins which activate adenylyl cyclase. This Sus scrofa (Pig) protein is D(1A) dopamine receptor (DRD1).